The primary structure comprises 356 residues: Adenine deaminase (356 aa).

His23, His25, and His211 together coordinate Zn(2+). Glu214 (proton donor) is an active-site residue. Asp292 is a binding site for Zn(2+). Asp293 provides a ligand contact to substrate.

The protein belongs to the metallo-dependent hydrolases superfamily. Adenosine and AMP deaminases family. Adenine deaminase type 2 subfamily. Zn(2+) serves as cofactor.

The protein resides in the cytoplasm. It is found in the nucleus. It carries out the reaction adenine + H2O + H(+) = hypoxanthine + NH4(+). Catalyzes the hydrolytic deamination of adenine to hypoxanthine. Plays an important role in the purine salvage pathway and in nitrogen catabolism. This Candida albicans (strain SC5314 / ATCC MYA-2876) (Yeast) protein is Adenine deaminase.